The sequence spans 683 residues: Solute carrier family 28 member 3 (683 aa).

The segment at 1–71 (MSAFKARGVE…EEEEEGEEDQ (71 aa)) is disordered. Over 1–97 (MSAFKARGVE…FYKRNKKIIH (97 aa)) the chain is Cytoplasmic. Over residues 60-71 (DNEEEEEGEEDQ) the composition is skewed to acidic residues. Residues 98–118 (YTFLGLLLVGYFALVIAACIV) form a helical membrane-spanning segment. The Extracellular segment spans residues 119–123 (NFKQS). The chain crosses the membrane as a helical span at residues 124 to 144 (LALLVLTLIAIFFFFWDLFIA). Residues 145–168 (KYGDKIAEALKPCQKFLDNHWSII) are Cytoplasmic-facing. Residues 169 to 189 (RWFVYGALLLAVILWLTLDTA) traverse the membrane as a helical segment. The Extracellular segment spans residues 190–192 (KRG). The helical transmembrane segment at 193–214 (ANQVIPFFGLILYILLVFIFSK) threads the bilayer. The Cytoplasmic portion of the chain corresponds to 215 to 222 (HPTKVRWR). The helical transmembrane segment at 223–242 (IVIWGLLLQFIFGLIILRTK) threads the bilayer. Topologically, residues 243–279 (PGLDAFNWLGIQVQTFLKYTDAGSRFLFGDDFQDHFF) are extracellular. The chain crosses the membrane as a helical span at residues 280–300 (AFAVLPIVIFFSTVMSMMYYL). Residues 301-324 (GLMQWLILKVGWLMQITMGTSPME) lie on the Cytoplasmic side of the membrane. An intramembrane region (helical) is located at residues 325–343 (SMVSAGNIFVGQTESPLLI). The Cytoplasmic portion of the chain corresponds to 344–356 (RPYLADLTISEMH). Residues 357–379 (SVMSSGFATIAGSVLGAYISLGI) traverse the membrane as a helical segment. The Extracellular segment spans residues 380–381 (PA). The chain crosses the membrane as a helical span at residues 382-403 (AHLLTASVMSAPAALAISKTFW). The Cytoplasmic segment spans residues 404-438 (PETKKSKNSTQTSIKLEKGQENNLVEAASQGASAA). The chain crosses the membrane as a helical span at residues 439–464 (VPLVANIAANLIAFLAVLAFINATLS). Residues 465–502 (WLGSMFNYPQFSFEIICSYVLMPFAFMMGVNYDDSFLV) are Extracellular-facing. An intramembrane region (helical) is located at residues 503 to 522 (AELLGMKTFFNEFVAYQRLS). The Extracellular portion of the chain corresponds to 523 to 561 (EYIHNRESGGPLFVDGVRQYMSVRSEAIATYALCGFANF). Residues 562 to 572 (GSLGIMIGGLS) form a helical membrane-spanning segment. At 573–585 (SLAPHRKSDIASC) the chain is on the cytoplasmic side. A helical membrane pass occupies residues 586-608 (GIRALIAGTIACFSTACIAGVLY). Residues 609–683 (IPELYCPNLL…GFNCSEVRPE (75 aa)) lie on the Extracellular side of the membrane.

This sequence belongs to the concentrative nucleoside transporter (CNT) (TC 2.A.41) family. In terms of assembly, homotrimer.

It is found in the cell membrane. It carries out the reaction thymidine(out) + 2 Na(+)(out) = thymidine(in) + 2 Na(+)(in). It catalyses the reaction cytidine(out) + 2 Na(+)(out) = cytidine(in) + 2 Na(+)(in). The enzyme catalyses uridine(out) + 2 Na(+)(out) = uridine(in) + 2 Na(+)(in). The catalysed reaction is adenosine(out) + 2 Na(+)(out) = adenosine(in) + 2 Na(+)(in). It carries out the reaction guanosine(out) + 2 Na(+)(out) = guanosine(in) + 2 Na(+)(in). It catalyses the reaction inosine(out) + 2 Na(+)(out) = inosine(in) + 2 Na(+)(in). Sodium-dependent, pyrimidine- and purine-selective. Involved in the homeostasis of endogenous nucleosides. Exhibits the transport characteristics of the nucleoside transport system cib or N3 subtype (N3/cib) (with marked transport of both thymidine and inosine). Employs a 2:1 sodium/nucleoside ratio. Also able to transport gemcitabine, 3'-azido-3'-deoxythymidine (AZT), ribavirin and 3-deazauridine. The polypeptide is Solute carrier family 28 member 3 (SLC28A3) (Eptatretus stoutii (Pacific hagfish)).